The following is a 351-amino-acid chain: Ceramide hydroxylase (351 aa).

The next 4 helical transmembrane spans lie at 26–46 (AAIY…GFLI), 47–67 (AATT…MLAL), 141–161 (GFLF…AILI), and 204–224 (VACW…VVPV).

This sequence belongs to the fatty acid desaturase type 1 family.

It is found in the cell inner membrane. It functions in the pathway lipid metabolism; sphingolipid metabolism. In terms of biological role, involved in de novo bacterial ceramide synthesis. The protein is Ceramide hydroxylase of Caulobacter vibrioides (strain NA1000 / CB15N) (Caulobacter crescentus).